The chain runs to 158 residues: Coenzyme F420 hydrogenase subunit delta (158 aa).

It belongs to the peptidase A31 family.

The sequence is that of Coenzyme F420 hydrogenase subunit delta (frhD) from Methanothermobacter thermautotrophicus (strain ATCC 29096 / DSM 1053 / JCM 10044 / NBRC 100330 / Delta H) (Methanobacterium thermoautotrophicum).